Here is a 153-residue protein sequence, read N- to C-terminus: Acylphosphatase-like protein MJ0553 (153 aa).

The Acylphosphatase-like domain occupies 4 to 102; that stretch reads TYELIIYGRV…SRLSSDDILE (99 aa).

The sequence is that of Acylphosphatase-like protein MJ0553 from Methanocaldococcus jannaschii (strain ATCC 43067 / DSM 2661 / JAL-1 / JCM 10045 / NBRC 100440) (Methanococcus jannaschii).